A 209-amino-acid chain; its full sequence is Large ribosomal subunit protein uL4 (209 aa).

The tract at residues 45 to 78 is disordered; that stretch reads RQGTHKAKERAEVAGSTRKIKKQKGTGTARAGSA.

This sequence belongs to the universal ribosomal protein uL4 family. In terms of assembly, part of the 50S ribosomal subunit.

Functionally, one of the primary rRNA binding proteins, this protein initially binds near the 5'-end of the 23S rRNA. It is important during the early stages of 50S assembly. It makes multiple contacts with different domains of the 23S rRNA in the assembled 50S subunit and ribosome. Its function is as follows. Forms part of the polypeptide exit tunnel. The chain is Large ribosomal subunit protein uL4 from Flavobacterium psychrophilum (strain ATCC 49511 / DSM 21280 / CIP 103535 / JIP02/86).